We begin with the raw amino-acid sequence, 395 residues long: General transcription factor IIH subunit 2-like protein (395 aa).

Positions 60-236 (HLYVVVDGSR…HYKELLTHHL (177 aa)) constitute a VWFA domain. Tyr-95 carries the phosphotyrosine modification. The C4-type zinc finger occupies 291–308 (CPQCRAKYCELPVECKIC).

This sequence belongs to the GTF2H2 family.

The protein resides in the nucleus. Functionally, component of the core-TFIIH basal transcription factor involved in nucleotide excision repair (NER) of DNA and, when complexed to CAK, in RNA transcription by RNA polymerase II. The chain is General transcription factor IIH subunit 2-like protein (GTF2H2C) from Homo sapiens (Human).